The sequence spans 423 residues: Maltoporin 1 (423 aa).

The signal sequence occupies residues 1–23 (MNTTLRALSVALAAALIAPSAFA).

It belongs to the porin LamB (TC 1.B.3) family. In terms of assembly, homotrimer formed of three 18-stranded antiparallel beta-barrels, containing three independent channels.

It localises to the cell outer membrane. The catalysed reaction is beta-maltose(in) = beta-maltose(out). Involved in the transport of maltose and maltodextrins. The sequence is that of Maltoporin 1 from Klebsiella pneumoniae subsp. pneumoniae (strain ATCC 700721 / MGH 78578).